The sequence spans 1058 residues: Gem-associated protein 4 (1058 aa).

Position 1 is an N-acetylmethionine (methionine 1). At threonine 84 the chain carries Phosphothreonine. Phosphoserine occurs at positions 86 and 205. Positions 714-735 (LPKEKRCLSLDRKDLAIHILEL) are leucine-zipper.

As to quaternary structure, part of the core SMN complex that contains SMN1, GEMIN2/SIP1, DDX20/GEMIN3, GEMIN4, GEMIN5, GEMIN6, GEMIN7, GEMIN8 and STRAP/UNRIP. Part of the SMN-Sm complex that contains SMN1, GEMIN2/SIP1, DDX20/GEMIN3, GEMIN4, GEMIN5, GEMIN6, GEMIN7, GEMIN8, STRAP/UNRIP and the Sm proteins SNRPB, SNRPD1, SNRPD2, SNRPD3, SNRPE, SNRPF and SNRPG. Interacts with GEMIN3; the interaction is direct. Interacts with GEMIN5. Interacts with GEMIN8; the interaction is direct. Interacts with several snRNP SM core proteins, including SNRPB, SNRPD1, SNRPD2, SNRPD3 and SNRPE. Interacts with PPP4R2.

It localises to the cytoplasm. Its subcellular location is the nucleus. The protein localises to the nucleolus. It is found in the gem. In terms of biological role, the SMN complex catalyzes the assembly of small nuclear ribonucleoproteins (snRNPs), the building blocks of the spliceosome, and thereby plays an important role in the splicing of cellular pre-mRNAs. Most spliceosomal snRNPs contain a common set of Sm proteins SNRPB, SNRPD1, SNRPD2, SNRPD3, SNRPE, SNRPF and SNRPG that assemble in a heptameric protein ring on the Sm site of the small nuclear RNA to form the core snRNP (Sm core). In the cytosol, the Sm proteins SNRPD1, SNRPD2, SNRPE, SNRPF and SNRPG are trapped in an inactive 6S pICln-Sm complex by the chaperone CLNS1A that controls the assembly of the core snRNP. To assemble core snRNPs, the SMN complex accepts the trapped 5Sm proteins from CLNS1A forming an intermediate. Binding of snRNA inside 5Sm triggers eviction of the SMN complex, thereby allowing binding of SNRPD3 and SNRPB to complete assembly of the core snRNP. The sequence is that of Gem-associated protein 4 (GEMIN4) from Homo sapiens (Human).